A 385-amino-acid polypeptide reads, in one-letter code: MELQEVLHMNGGEGEASYAKNSSFNQLALAKVKPFLEQCIRELLRANLPNINKCIKVADLGCASGPNTLLTVRDTVQSIDKVRQEMKNELERPTIQVFLTDLFQNDFNSVFMLLPSFYRKLEKENGRKIGSCLIAAMPGSFHGRLFPEESMHFLHSSYSLQFLSQVPSGLVTELGITANKRSIYSSKASPPPVQKAYLDQFTKDFTTFLRMRSEELLSRGRMLLTCICKGDECDGPNTMDLLEMAINDLVVEGRLGEEKLDSFNVPIYTASVEEVKCMVEEEGSFEILYLQTFKLRYDAGFSIDDDCQVRSHSPEYSDEHARAAHVASLIRSVYEPILASHFGEAIIPDIFHRFATNAAKVIRLGKGFYNNLIISLAKKPEKSDV.

S-adenosyl-L-homocysteine contacts are provided by Tyr-18, Cys-62, Asn-67, Asp-101, Leu-102, Ser-140, and Phe-141. Positions 158, 161, and 162 each coordinate caffeine. Mg(2+) is bound at residue Asn-179. Position 238 (Thr-238) interacts with caffeine. The Mg(2+) site is built by Asp-261, Phe-263, and Asn-264. Residue Tyr-369 participates in caffeine binding.

This sequence belongs to the methyltransferase superfamily. Type-7 methyltransferase family. It depends on Mg(2+) as a cofactor.

It functions in the pathway alkaloid biosynthesis. Functionally, may be involved in the biosynthesis of caffeine. The polypeptide is Probable caffeine synthase MTL1 (Coffea canephora (Robusta coffee)).